Consider the following 1657-residue polypeptide: Endoribonuclease Dicer homolog 4 (1657 aa).

Residues 1–14 (MGDAAAAAPAAAAA) are compositionally biased toward low complexity. Residues 1–26 (MGDAAAAAPAAAAAGPSSTRGEPKDP) form a disordered region. Residues 37–214 (LCKRAVEENI…SHSFTEKGGR (178 aa)) enclose the Helicase ATP-binding domain. 50–57 (LGTGCGKT) is an ATP binding site. The DECH box motif lies at 157–160 (DECH). The 168-residue stretch at 400-567 (NKFSVLINVL…TSNDMFDCLE (168 aa)) folds into the Helicase C-terminal domain. The 91-residue stretch at 585–675 (SVSLLHCYCD…LPGPGSRKNK (91 aa)) folds into the Dicer dsRNA-binding fold domain. The region spanning 856-978 (DVSVHASYSS…LPPELCSLKV (123 aa)) is the PAZ domain. RNase III domains follow at residues 1010–1173 (DVML…VEGG) and 1214–1358 (IAGL…LDSG). 3 residues coordinate Mg(2+): Glu-1252, Asp-1344, and Glu-1347. One can recognise a DRBM 1 domain in the interval 1384–1451 (NPMRELRELC…AQETLSKLKN (68 aa)). Positions 1525 to 1556 (GSGKHDVNNGRNNQPKLATQSGRLPSEATEKS) are disordered. Over residues 1533-1547 (NGRNNQPKLATQSGR) the composition is skewed to polar residues. One can recognise a DRBM 2 domain in the interval 1569–1645 (TARSFLFELC…AQGALWCLKQ (77 aa)).

The protein belongs to the helicase family. Dicer subfamily. In terms of assembly, may interact with ARGONAUTE1 or PINHEAD through their common PAZ domains. The cofactor is Mg(2+). Requires Mn(2+) as cofactor. Expressed in roots, leaf blades, leaf sheaths, shoot apices and spikelets.

Its subcellular location is the nucleus. Functionally, involved in the RNA silencing pathway. Cleaves double-stranded RNA to produce small interfering RNAs (siRNAs) which target the selective destruction of complementary RNAs. Required for the production of 21 nucleotide siRNAs. Regulates shoot apical meristem (SAM) initiation and maintenance, leaf polarization and lemma polarity through the trans-acting siRNAS (ta-siRNAs) pathway, which probably modulate the expression of the ARF2, ARF3, ARF4, ARF14 and ARF15 genes. Can process endogenous 21 nucleotide siRNAs derived from an imperfect inverted repeat. May not be involved in microRNAs (miRNAs) production. This Oryza sativa subsp. japonica (Rice) protein is Endoribonuclease Dicer homolog 4 (DCL4).